A 288-amino-acid polypeptide reads, in one-letter code: Syntaxin-1A (288 aa).

A compositionally biased stretch (basic and acidic residues) spans 1 to 13; it reads MKDRTQELRTAKD. The tract at residues 1 to 20 is disordered; sequence MKDRTQELRTAKDSDDDDDV. The Cytoplasmic portion of the chain corresponds to 1–265; the sequence is MKDRTQELRT…KYQSKARRKK (265 aa). 3 positions are modified to phosphoserine: Ser-14, Ser-64, and Ser-95. The stretch at 68-109 forms a coiled coil; it reads DEKTKEELEELMSDIKKTANKVRSKLKSIEQSIEQEEGLNRS. Ser-188 carries the phosphoserine; by DAPK1 modification. One can recognise a t-SNARE coiled-coil homology domain in the interval 192 to 254; it reads LSEIETRHSE…ERAVSDTKKA (63 aa). Glycyl lysine isopeptide (Lys-Gly) (interchain with G-Cter in SUMO) cross-links involve residues Lys-252, Lys-253, and Lys-256. A helical; Anchor for type IV membrane protein transmembrane segment spans residues 266–288; that stretch reads IMIVICCVVLGIVIASTFGGIFG.

It belongs to the syntaxin family. As to quaternary structure, part of the SNARE core complex containing SNAP25, VAMP2 and STX1A; this complex constitutes the basic catalytic machinery of the complex neurotransmitter release apparatus. The SNARE complex interacts with CPLX1. Interacts with STXBP1. The interaction with STXBP1 promotes assembly of the SNARE complex. Interacts (via C-terminus) with KCNB1 (via C-terminus); the interaction increases in a calcium-dependent manner and induces a pore-independent enhancement of exocytosis in neuroendocrine cells, chromaffin cells, pancreatic beta cells and from the soma of dorsal root ganglia (DRG) neurons. Interacts with SYTL4. Interacts with STXBP6. Interacts with PLCL1 (via C2 domain). Interacts with OTOF. Interacts with LGI3. Interacts (via the H3 domain) with SLC6A4 (via the N-terminus); this interaction regulates SLC4A6 channel conductance in thalamocortical neurons. Interacts with SYT6 and SYT8; the interaction is Ca(2+)-dependent. Interacts with VAMP8. Interacts with SNAP23. Interacts with VAPA and SYBU. Interacts with PRRT2. Interacts with SEPT8. Interacts with STXBP5L. Interacts with synaptotagmin-1/SYT1. Interacts with SEPTIN5; in the cerebellar cortex. Interacts with SEPTIN4; in the striatum. Phosphorylated by CK2. Phosphorylation at Ser-188 by DAPK1 significantly decreases its interaction with STXBP1. In terms of processing, sumoylated, sumoylation is required for regulation of synaptic vesicle endocytosis. Post-translationally, (Microbial infection) Targeted and hydrolyzed by C.botulinum neurotoxin type C (BoNT/C) which inhibits neurotransmitter release. Probably hydrolyzes the 253-Lys-|-Ala-254 bond.

The protein localises to the cytoplasmic vesicle. It localises to the secretory vesicle. The protein resides in the synaptic vesicle membrane. Its subcellular location is the synapse. It is found in the synaptosome. The protein localises to the cell membrane. Functionally, plays an essential role in hormone and neurotransmitter calcium-dependent exocytosis and endocytosis. Part of the SNARE (Soluble NSF Attachment Receptor) complex composed of SNAP25, STX1A and VAMP2 which mediates the fusion of synaptic vesicles with the presynaptic plasma membrane. STX1A and SNAP25 are localized on the plasma membrane while VAMP2 resides in synaptic vesicles. The pairing of the three SNAREs from the N-terminal SNARE motifs to the C-terminal anchors leads to the formation of the SNARE complex, which brings membranes into close proximity and results in final fusion. Participates in the calcium-dependent regulation of acrosomal exocytosis in sperm. Also plays an important role in the exocytosis of hormones such as insulin or glucagon-like peptide 1 (GLP-1). This is Syntaxin-1A (STX1A) from Bos taurus (Bovine).